A 363-amino-acid polypeptide reads, in one-letter code: Phosphoserine aminotransferase (363 aa).

An L-glutamate-binding site is contributed by Arg42. Residues 76–77 (GR), Trp102, Thr156, Asp175, and Gln198 contribute to the pyridoxal 5'-phosphate site. Lys199 is modified (N6-(pyridoxal phosphate)lysine). Pyridoxal 5'-phosphate is bound at residue 240–241 (NT).

This sequence belongs to the class-V pyridoxal-phosphate-dependent aminotransferase family. SerC subfamily. In terms of assembly, homodimer. It depends on pyridoxal 5'-phosphate as a cofactor.

Its subcellular location is the cytoplasm. The enzyme catalyses O-phospho-L-serine + 2-oxoglutarate = 3-phosphooxypyruvate + L-glutamate. It carries out the reaction 4-(phosphooxy)-L-threonine + 2-oxoglutarate = (R)-3-hydroxy-2-oxo-4-phosphooxybutanoate + L-glutamate. Its pathway is amino-acid biosynthesis; L-serine biosynthesis; L-serine from 3-phospho-D-glycerate: step 2/3. It functions in the pathway cofactor biosynthesis; pyridoxine 5'-phosphate biosynthesis; pyridoxine 5'-phosphate from D-erythrose 4-phosphate: step 3/5. Functionally, catalyzes the reversible conversion of 3-phosphohydroxypyruvate to phosphoserine and of 3-hydroxy-2-oxo-4-phosphonooxybutanoate to phosphohydroxythreonine. The sequence is that of Phosphoserine aminotransferase from Shewanella baltica (strain OS185).